We begin with the raw amino-acid sequence, 607 residues long: Aspartate--tRNA(Asp/Asn) ligase (607 aa).

E168 contacts L-aspartate. The aspartate stretch occupies residues 192–195 (QLFK). R214 provides a ligand contact to L-aspartate. Residues 214 to 216 (RDE) and Q223 contribute to the ATP site. H449 contacts L-aspartate. E483 provides a ligand contact to ATP. R490 contributes to the L-aspartate binding site. 535–538 (GWDR) is an ATP binding site. The tract at residues 578-607 (LEAGVDARPKPEARAQAGTAGPAAPVADPT) is disordered. Over residues 580-590 (AGVDARPKPEA) the composition is skewed to basic and acidic residues. Low complexity predominate over residues 591–607 (RAQAGTAGPAAPVADPT).

This sequence belongs to the class-II aminoacyl-tRNA synthetase family. Type 1 subfamily. As to quaternary structure, homodimer.

It is found in the cytoplasm. It catalyses the reaction tRNA(Asx) + L-aspartate + ATP = L-aspartyl-tRNA(Asx) + AMP + diphosphate. Aspartyl-tRNA synthetase with relaxed tRNA specificity since it is able to aspartylate not only its cognate tRNA(Asp) but also tRNA(Asn). Reaction proceeds in two steps: L-aspartate is first activated by ATP to form Asp-AMP and then transferred to the acceptor end of tRNA(Asp/Asn). In Salinispora tropica (strain ATCC BAA-916 / DSM 44818 / JCM 13857 / NBRC 105044 / CNB-440), this protein is Aspartate--tRNA(Asp/Asn) ligase.